A 277-amino-acid polypeptide reads, in one-letter code: Pristinamycin IIA synthase subunit B (277 aa).

As to quaternary structure, heterodimer of two subunits, SnaA and SnaB. The cofactor is FMN.

Functionally, catalyzes the oxidation of the proline residue of pristinamycin IIB (PIIB) to pristinamycin IIA (PIIA). The chain is Pristinamycin IIA synthase subunit B (snaB) from Streptomyces pristinaespiralis.